A 322-amino-acid polypeptide reads, in one-letter code: Ferredoxin--NADP reductase (322 aa).

7 residues coordinate FAD: Asp-34, Gln-42, Tyr-47, Val-87, Phe-120, Asp-279, and Thr-320.

It belongs to the ferredoxin--NADP reductase type 2 family. Homodimer. The cofactor is FAD.

It carries out the reaction 2 reduced [2Fe-2S]-[ferredoxin] + NADP(+) + H(+) = 2 oxidized [2Fe-2S]-[ferredoxin] + NADPH. In Streptococcus pneumoniae serotype 19F (strain G54), this protein is Ferredoxin--NADP reductase.